The chain runs to 465 residues: ATP synthase subunit beta (465 aa).

Position 153 to 160 (153 to 160) interacts with ATP; it reads GGAGVGKT.

The protein belongs to the ATPase alpha/beta chains family. As to quaternary structure, F-type ATPases have 2 components, CF(1) - the catalytic core - and CF(0) - the membrane proton channel. CF(1) has five subunits: alpha(3), beta(3), gamma(1), delta(1), epsilon(1). CF(0) has three main subunits: a(1), b(2) and c(9-12). The alpha and beta chains form an alternating ring which encloses part of the gamma chain. CF(1) is attached to CF(0) by a central stalk formed by the gamma and epsilon chains, while a peripheral stalk is formed by the delta and b chains.

Its subcellular location is the cell membrane. It carries out the reaction ATP + H2O + 4 H(+)(in) = ADP + phosphate + 5 H(+)(out). Its function is as follows. Produces ATP from ADP in the presence of a proton gradient across the membrane. The catalytic sites are hosted primarily by the beta subunits. The polypeptide is ATP synthase subunit beta (Clostridium perfringens (strain SM101 / Type A)).